We begin with the raw amino-acid sequence, 207 residues long: Fibroblast growth factor 18 (207 aa).

An N-terminal signal peptide occupies residues 1–27 (MYSAPSTCTCLCLHFLLLCFQVQVLAA). N-linked (GlcNAc...) asparagine glycosylation occurs at Asn-39. The cysteines at positions 109 and 127 are disulfide-linked. A glycan (N-linked (GlcNAc...) asparagine) is linked at Asn-137.

This sequence belongs to the heparin-binding growth factors family. Interacts with FGFR3 and FGFR4.

It localises to the secreted. Its function is as follows. Plays an important role in the regulation of cell proliferation, cell differentiation and cell migration. Required for normal ossification and bone development. Stimulates hepatic and intestinal proliferation. In Bos taurus (Bovine), this protein is Fibroblast growth factor 18 (FGF18).